The sequence spans 126 residues: Fluoride-specific ion channel FluC 2 (126 aa).

A run of 4 helical transmembrane segments spans residues T5–L25, G44–L64, A68–L88, and M99–L119. The Na(+) site is built by G78 and T81.

The protein belongs to the fluoride channel Fluc/FEX (TC 1.A.43) family.

Its subcellular location is the cell membrane. The catalysed reaction is fluoride(in) = fluoride(out). Its activity is regulated as follows. Na(+) is not transported, but it plays an essential structural role and its presence is essential for fluoride channel function. In terms of biological role, fluoride-specific ion channel. Important for reducing fluoride concentration in the cell, thus reducing its toxicity. In Mycobacterium bovis (strain ATCC BAA-935 / AF2122/97), this protein is Fluoride-specific ion channel FluC 2.